We begin with the raw amino-acid sequence, 188 residues long: Large ribosomal subunit protein eL18 (188 aa).

Residue Lys119 forms a Glycyl lysine isopeptide (Lys-Gly) (interchain with G-Cter in SUMO2) linkage. Position 130 is a phosphoserine (Ser130). The interval 150–188 (RHFGKAPGTPHSHTKPYVRSKGRKFERARGRRASRGYKN) is disordered. A Phosphothreonine modification is found at Thr158. 2 stretches are compositionally biased toward basic residues: residues 161–171 (SHTKPYVRSKG) and 178–188 (RGRRASRGYKN). Residue Lys164 forms a Glycyl lysine isopeptide (Lys-Gly) (interchain with G-Cter in SUMO2) linkage.

Belongs to the eukaryotic ribosomal protein eL18 family. In terms of assembly, component of the large ribosomal subunit.

It is found in the cytoplasm. Its subcellular location is the cytosol. The protein resides in the rough endoplasmic reticulum. Functionally, component of the large ribosomal subunit. The ribosome is a large ribonucleoprotein complex responsible for the synthesis of proteins in the cell. The sequence is that of Large ribosomal subunit protein eL18 (Rpl18) from Rattus norvegicus (Rat).